The following is a 217-amino-acid chain: Putative 3-methyladenine DNA glycosylase (217 aa).

Residues 105–145 (SHNNVYTIDTAKIKSQITDEKTQSIIIRKNRRIMKFYIPNL) form the RPE2 insert domain.

Belongs to the DNA glycosylase MPG family.

This chain is Putative 3-methyladenine DNA glycosylase, found in Rickettsia prowazekii (strain Madrid E).